Consider the following 210-residue polypeptide: Na(+)-translocating NADH-quinone reductase subunit D (210 aa).

5 helical membrane-spanning segments follow: residues Phe42–Ile62, Ile72–Ala92, Val103–Met123, Phe131–Val151, and Asn178–Val198.

This sequence belongs to the NqrDE/RnfAE family. Composed of six subunits; NqrA, NqrB, NqrC, NqrD, NqrE and NqrF.

Its subcellular location is the cell inner membrane. It catalyses the reaction a ubiquinone + n Na(+)(in) + NADH + H(+) = a ubiquinol + n Na(+)(out) + NAD(+). In terms of biological role, NQR complex catalyzes the reduction of ubiquinone-1 to ubiquinol by two successive reactions, coupled with the transport of Na(+) ions from the cytoplasm to the periplasm. NqrA to NqrE are probably involved in the second step, the conversion of ubisemiquinone to ubiquinol. The protein is Na(+)-translocating NADH-quinone reductase subunit D of Aeromonas hydrophila subsp. hydrophila (strain ATCC 7966 / DSM 30187 / BCRC 13018 / CCUG 14551 / JCM 1027 / KCTC 2358 / NCIMB 9240 / NCTC 8049).